We begin with the raw amino-acid sequence, 162 residues long: Regulatory protein RecX (162 aa).

The protein belongs to the RecX family.

It localises to the cytoplasm. Modulates RecA activity. The sequence is that of Regulatory protein RecX from Xanthomonas axonopodis pv. citri (strain 306).